A 250-amino-acid chain; its full sequence is Ribonuclease PH (250 aa).

Phosphate is bound by residues Arg99 and 137–139 (GTR).

Belongs to the RNase PH family. As to quaternary structure, homohexameric ring arranged as a trimer of dimers.

It carries out the reaction tRNA(n+1) + phosphate = tRNA(n) + a ribonucleoside 5'-diphosphate. Functionally, phosphorolytic 3'-5' exoribonuclease that plays an important role in tRNA 3'-end maturation. Removes nucleotide residues following the 3'-CCA terminus of tRNAs; can also add nucleotides to the ends of RNA molecules by using nucleoside diphosphates as substrates, but this may not be physiologically important. Probably plays a role in initiation of 16S rRNA degradation (leading to ribosome degradation) during starvation. This Bordetella parapertussis (strain 12822 / ATCC BAA-587 / NCTC 13253) protein is Ribonuclease PH.